We begin with the raw amino-acid sequence, 506 residues long: Galactose/methyl galactoside import ATP-binding protein MglA (506 aa).

2 consecutive ABC transporter domains span residues 14-249 (LEMS…VGRS) and 264-506 (VILE…SLHL). Residue 46–53 (GENGAGKS) coordinates ATP.

The protein belongs to the ABC transporter superfamily. Galactose/methyl galactoside importer (TC 3.A.1.2.3) family. In terms of assembly, the complex is composed of one ATP-binding protein (MglA), two transmembrane proteins (MglC) and a solute-binding protein (MglB).

It is found in the cell inner membrane. The catalysed reaction is D-galactose(out) + ATP + H2O = D-galactose(in) + ADP + phosphate + H(+). It catalyses the reaction methyl beta-D-galactoside(out) + ATP + H2O = methyl beta-D-galactoside(in) + ADP + phosphate + H(+). Its function is as follows. Part of the ABC transporter complex MglABC involved in galactose/methyl galactoside import. Responsible for energy coupling to the transport system. This chain is Galactose/methyl galactoside import ATP-binding protein MglA, found in Escherichia coli O157:H7.